We begin with the raw amino-acid sequence, 217 residues long: Oxygen regulatory protein NreC (217 aa).

The 118-residue stretch at 2–119 folds into the Response regulatory domain; sequence KIVIADDHAV…QLISAVRTVY (118 aa). Position 53 is a 4-aspartylphosphate (Asp-53). Residues 148–213 form the HTH luxR-type domain; the sequence is TNDPFRILSK…ELVEYALKKK (66 aa). Residues 172 to 191 constitute a DNA-binding region (H-T-H motif); it reads NKEIAEKLFVSVKTVEAHKT.

In terms of processing, phosphorylated by NreB.

It localises to the cytoplasm. Its function is as follows. Member of the two-component regulatory system NreB/NreC involved in the control of dissimilatory nitrate/nitrite reduction in response to oxygen. Phosphorylated NreC binds to a GC-rich palindromic sequence at the promoters of the nitrate (narGHJI) and nitrite (nir) reductase operons, as well as the putative nitrate transporter gene narT, and activates their expression. This is Oxygen regulatory protein NreC (nreC) from Staphylococcus carnosus (strain TM300).